Reading from the N-terminus, the 218-residue chain is MLFISATNTNAGKTTCARLLAQYCNACGVKTILLKPIETGVNDAINHSSDAHLFLQDNRLLDRSLTLKDISFYRYHKVSAPLIAQQEEDPNAPIDTDNLTQRLHNFTKTYDLVIVEGAGGLCVPITLEENMLDFALKLKAKMLLISHDNLGLINDCLLNDFLLKSHQLDYKIAINLKGNNTAFHSISLPYIELFNTRSNNPIVIFQQSLKVLMSFALK.

9-15 (TNAGKTT) is an ATP binding site. Residue Thr14 participates in Mg(2+) binding. Lys35 is an active-site residue. Phosphate is bound at residue Lys35. Thr39 contacts substrate. ATP contacts are provided by residues Asp50, Glu116, and 116–119 (EGAG). Asp50 and Glu116 together coordinate Mg(2+). 116–119 (EGAG) is a phosphate binding site. Residue 151–154 (GLIN) coordinates substrate. ATP is bound by residues Asn175 and 175-177 (NLK).

It belongs to the dethiobiotin synthetase family. Homodimer. Mg(2+) is required as a cofactor.

It localises to the cytoplasm. It carries out the reaction (7R,8S)-7,8-diammoniononanoate + CO2 + ATP = (4R,5S)-dethiobiotin + ADP + phosphate + 3 H(+). It participates in cofactor biosynthesis; biotin biosynthesis; biotin from 7,8-diaminononanoate: step 1/2. Its function is as follows. Catalyzes a mechanistically unusual reaction, the ATP-dependent insertion of CO2 between the N7 and N8 nitrogen atoms of 7,8-diaminopelargonic acid (DAPA, also called 7,8-diammoniononanoate) to form a ureido ring. The chain is ATP-dependent dethiobiotin synthetase BioD from Helicobacter pylori (strain ATCC 700392 / 26695) (Campylobacter pylori).